The chain runs to 69 residues: Ribosome modulation factor (69 aa).

Belongs to the ribosome modulation factor family.

The protein localises to the cytoplasm. During stationary phase, converts 70S ribosomes to an inactive dimeric form (100S ribosomes). In Marinomonas mediterranea (strain ATCC 700492 / JCM 21426 / NBRC 103028 / MMB-1), this protein is Ribosome modulation factor.